Here is a 542-residue protein sequence, read N- to C-terminus: CTP synthase (542 aa).

Residues 1 to 266 form an amidoligase domain region; it reads MATNYIFVTG…DDLICQRFRL (266 aa). Residue Ser-14 participates in CTP binding. Ser-14 contributes to the UTP binding site. ATP is bound by residues 15-20 and Asp-72; that span reads SLGKGI. Positions 72 and 140 each coordinate Mg(2+). Residues 147-149, 187-192, and Lys-223 contribute to the CTP site; these read DIE and KTKPTQ. Residues 187 to 192 and Lys-223 contribute to the UTP site; that span reads KTKPTQ. 239–241 is a binding site for ATP; sequence KDV. The 252-residue stretch at 291–542 folds into the Glutamine amidotransferase type-1 domain; it reads TIGMVGKYVE…VKAAKENQKK (252 aa). An L-glutamine-binding site is contributed by Gly-352. Cys-379 functions as the Nucleophile; for glutamine hydrolysis in the catalytic mechanism. Residues 380-383, Glu-403, and Arg-470 each bind L-glutamine; that span reads LGMQ. Residues His-515 and Glu-517 contribute to the active site.

It belongs to the CTP synthase family. As to quaternary structure, homotetramer.

It carries out the reaction UTP + L-glutamine + ATP + H2O = CTP + L-glutamate + ADP + phosphate + 2 H(+). It catalyses the reaction L-glutamine + H2O = L-glutamate + NH4(+). The catalysed reaction is UTP + NH4(+) + ATP = CTP + ADP + phosphate + 2 H(+). It functions in the pathway pyrimidine metabolism; CTP biosynthesis via de novo pathway; CTP from UDP: step 2/2. Its activity is regulated as follows. Allosterically activated by GTP, when glutamine is the substrate; GTP has no effect on the reaction when ammonia is the substrate. The allosteric effector GTP functions by stabilizing the protein conformation that binds the tetrahedral intermediate(s) formed during glutamine hydrolysis. Inhibited by the product CTP, via allosteric rather than competitive inhibition. Functionally, catalyzes the ATP-dependent amination of UTP to CTP with either L-glutamine or ammonia as the source of nitrogen. Regulates intracellular CTP levels through interactions with the four ribonucleotide triphosphates. The chain is CTP synthase from Mannheimia succiniciproducens (strain KCTC 0769BP / MBEL55E).